The sequence spans 616 residues: Spastin (616 aa).

The interval 1–43 (MNSPGGRGKKKGSGGASNPVPPRPPPPCLAPAPPAAGPAPPPE) is disordered. The segment at 1-50 (MNSPGGRGKKKGSGGASNPVPPRPPPPCLAPAPPAAGPAPPPESPHKRNL) is required for nuclear localization. The Cytoplasmic portion of the chain corresponds to 1–56 (MNSPGGRGKKKGSGGASNPVPPRPPPPCLAPAPPAAGPAPPPESPHKRNLYYFSYP). Residues 1–80 (MNSPGGRGKK…LGLLFVWLCQ (80 aa)) are required for interaction with ATL1. The required for midbody localization stretch occupies residues 1-194 (MNSPGGRGKK…LVMAKDRLQL (194 aa)). The segment at 1 to 300 (MNSPGGRGKK…GTPKTNRTNK (300 aa)) is required for interaction with RTN1. The Nuclear localization signal signature appears at 4-11 (PGGRGKKK). Residues 19–43 (PVPPRPPPPCLAPAPPAAGPAPPPE) show a composition bias toward pro residues. The segment at 50 to 87 (LYYFSYPLFVGFALLRLVAFHLGLLFVWLCQRFSRALM) is required for interaction with SSNA1 and microtubules. An intramembrane region (helical) is located at residues 57-77 (LFVGFALLRLVAFHLGLLFVW). Positions 59 to 67 (VGFALLRLV) match the Nuclear export signal motif. The Cytoplasmic segment spans residues 78-616 (LCQRFSRALM…WNKDFGDTTV (539 aa)). Residues 112–196 (EAERVRVFHK…MAKDRLQLLE (85 aa)) are sufficient for interaction with CHMP1B. Positions 114–200 (ERVRVFHKQA…RLQLLEKMQP (87 aa)) are required for interaction with microtubules. One can recognise an MIT domain in the interval 120–195 (HKQAFEYISI…VMAKDRLQLL (76 aa)). A disordered region spans residues 224 to 266 (HLQSESGAVPKRKDPLTHTSNSLPRSKTVMKTGSAGLSGHHRA). Residues 228-616 (ESGAVPKRKD…WNKDFGDTTV (389 aa)) form a sufficient for microtubule severing region. Polar residues predominate over residues 240–254 (THTSNSLPRSKTVMK). A phosphoserine mark is found at S245 and S268. Positions 270–328 (SGLSMVSGVKQGSGPAPTTHKGTPKTNRTNKPSTPTTATRKKKDLKNFRNVDSNLANLI) are required for interaction with microtubules and microtubule severing. Residues 278–312 (VKQGSGPAPTTHKGTPKTNRTNKPSTPTTATRKKK) form a disordered region. The segment covering 289-307 (HKGTPKTNRTNKPSTPTTA) has biased composition (polar residues). At T306 the chain carries Phosphothreonine. The Nuclear localization signal signature appears at 309–312 (RKKK). The required for interaction with microtubules stretch occupies residues 310–312 (KKK). 382-389 (GPPGNGKT) contacts ATP. Residue S597 is modified to Phosphoserine.

The protein belongs to the AAA ATPase family. Spastin subfamily. In terms of assembly, homohexamer. Mostly monomeric, but assembles into hexameric structure for short periods of time. Oligomerization seems to be a prerequisite for catalytic activity. Binding to ATP in a cleft between two adjacent subunits stabilizes the homohexameric form. Binds to microtubules at least in part via the alpha-tubulin and beta-tubulin tails. The hexamer adopts a ring conformation through which microtubules pass prior to being severed. Does not interact strongly with tubulin heterodimers. Interacts (via MIT domain) with CHMP1B; the interaction is direct. Interacts with SSNA1. Interacts with ATL1. Interacts with RTN1. Interacts with ZFYVE27. Isoform 1 but not isoform 3 interacts with RTN2. Interacts with REEP1. Interacts (via MIT domain) with IST1. In terms of tissue distribution, expressed in brain, heart, kidney, liver, lung, pancreas, placenta and skeletal muscle. The short isoforms may predominate in brain and spinal cord.

It localises to the membrane. The protein localises to the endoplasmic reticulum. The protein resides in the midbody. Its subcellular location is the cytoplasm. It is found in the cytoskeleton. It localises to the microtubule organizing center. The protein localises to the centrosome. The protein resides in the perinuclear region. Its subcellular location is the nucleus. It is found in the spindle. It localises to the cell projection. The protein localises to the axon. The protein resides in the endoplasmic reticulum membrane. Its subcellular location is the nucleus membrane. It is found in the lipid droplet. It localises to the endosome. It catalyses the reaction n ATP + n H2O + a microtubule = n ADP + n phosphate + (n+1) alpha/beta tubulin heterodimers.. With respect to regulation, allosteric enzyme with a cooperative mechanism; at least two neighbor subunits influence each other strongly in spastin hexamers. Microtubule binding promotes cooperative interactions among spastin subunits. ATP-bound enzyme interacts strongly and cooperatively with microtubules; this interaction stimulates ATP hydrolysis. Functionally, ATP-dependent microtubule severing protein that specifically recognizes and cuts microtubules that are polyglutamylated. Preferentially recognizes and acts on microtubules decorated with short polyglutamate tails: severing activity increases as the number of glutamates per tubulin rises from one to eight, but decreases beyond this glutamylation threshold. Severing activity is not dependent on tubulin acetylation or detyrosination. Microtubule severing promotes reorganization of cellular microtubule arrays and the release of microtubules from the centrosome following nucleation. It is critical for the biogenesis and maintenance of complex microtubule arrays in axons, spindles and cilia. SPAST is involved in abscission step of cytokinesis and nuclear envelope reassembly during anaphase in cooperation with the ESCRT-III complex. Recruited at the midbody, probably by IST1, and participates in membrane fission during abscission together with the ESCRT-III complex. Recruited to the nuclear membrane by IST1 and mediates microtubule severing, promoting nuclear envelope sealing and mitotic spindle disassembly during late anaphase. Required for membrane traffic from the endoplasmic reticulum (ER) to the Golgi and endosome recycling. Recruited by IST1 to endosomes and regulates early endosomal tubulation and recycling by mediating microtubule severing. Probably plays a role in axon growth and the formation of axonal branches. In terms of biological role, involved in lipid metabolism by regulating the size and distribution of lipid droplets. The protein is Spastin of Homo sapiens (Human).